The sequence spans 23 residues: Coenzyme PQQ synthesis protein A (23 aa).

The pyrroloquinoline quinone (Glu-Tyr) cross-link spans 15–19 (EVTLY).

This sequence belongs to the PqqA family.

It participates in cofactor biosynthesis; pyrroloquinoline quinone biosynthesis. In terms of biological role, required for coenzyme pyrroloquinoline quinone (PQQ) biosynthesis. PQQ is probably formed by cross-linking a specific glutamate to a specific tyrosine residue and excising these residues from the peptide. The protein is Coenzyme PQQ synthesis protein A of Klebsiella pneumoniae (strain 342).